The following is a 337-amino-acid chain: Dihydroorotate dehydrogenase (quinone) (337 aa).

Residues A61 to K65 and T85 each bind FMN. Residue K65 coordinates substrate. Residue N110 to F114 coordinates substrate. Residues N138 and N171 each contribute to the FMN site. N171 contacts substrate. S174 serves as the catalytic Nucleophile. N176 is a binding site for substrate. FMN contacts are provided by K216 and T244. N245–T246 serves as a coordination point for substrate. Residues G267, G296, and Y317–S318 each bind FMN.

Belongs to the dihydroorotate dehydrogenase family. Type 2 subfamily. As to quaternary structure, monomer. FMN is required as a cofactor.

It is found in the cell membrane. The enzyme catalyses (S)-dihydroorotate + a quinone = orotate + a quinol. It functions in the pathway pyrimidine metabolism; UMP biosynthesis via de novo pathway; orotate from (S)-dihydroorotate (quinone route): step 1/1. Its function is as follows. Catalyzes the conversion of dihydroorotate to orotate with quinone as electron acceptor. In Thiobacillus denitrificans (strain ATCC 25259 / T1), this protein is Dihydroorotate dehydrogenase (quinone).